The following is a 243-amino-acid chain: 4-hydroxy-tetrahydrodipicolinate reductase (243 aa).

NAD(+)-binding positions include Gly-9–Met-14, Gly-78–Ser-80, and Ala-104–Phe-107. The Proton donor/acceptor role is filled by His-134. A (S)-2,3,4,5-tetrahydrodipicolinate-binding site is contributed by His-135. Lys-138 serves as the catalytic Proton donor. Residue Gly-144–Thr-145 participates in (S)-2,3,4,5-tetrahydrodipicolinate binding.

The protein belongs to the DapB family.

The protein localises to the cytoplasm. The enzyme catalyses (S)-2,3,4,5-tetrahydrodipicolinate + NAD(+) + H2O = (2S,4S)-4-hydroxy-2,3,4,5-tetrahydrodipicolinate + NADH + H(+). It carries out the reaction (S)-2,3,4,5-tetrahydrodipicolinate + NADP(+) + H2O = (2S,4S)-4-hydroxy-2,3,4,5-tetrahydrodipicolinate + NADPH + H(+). It functions in the pathway amino-acid biosynthesis; L-lysine biosynthesis via DAP pathway; (S)-tetrahydrodipicolinate from L-aspartate: step 4/4. Its function is as follows. Catalyzes the conversion of 4-hydroxy-tetrahydrodipicolinate (HTPA) to tetrahydrodipicolinate. This chain is 4-hydroxy-tetrahydrodipicolinate reductase, found in Legionella pneumophila (strain Corby).